The following is a 552-amino-acid chain: Carotenoid cleavage dioxygenase 8 homolog A, chloroplastic (552 aa).

A chloroplast-targeting transit peptide spans 1–43 (MATSLTLIATPCTAPRSSSSFALAPRLPPRCSNATAARRRAVR). Positions 32–73 (SNATAARRRAVRATTLQSDQEPAGSGDSGATTTKLSASTSVR) are disordered. Residues 59–72 (SGATTTKLSASTSV) are compositionally biased toward polar residues. The Fe cation site is built by His-239, His-289, His-356, and His-543.

It belongs to the carotenoid oxygenase family. Fe(2+) is required as a cofactor. Highly expressed in panicles, inflorescences and parenchyma cells of the root stele, and at lower levels in shoot apex, leaf buds and xylem parenchyma cells of the stem.

The protein resides in the plastid. It localises to the chloroplast. In terms of biological role, may be involved in strigolactones biosynthesis. The sequence is that of Carotenoid cleavage dioxygenase 8 homolog A, chloroplastic (CCD8A) from Oryza sativa subsp. japonica (Rice).